We begin with the raw amino-acid sequence, 89 residues long: Small ribosomal subunit protein uS15 (89 aa).

This sequence belongs to the universal ribosomal protein uS15 family. In terms of assembly, part of the 30S ribosomal subunit. Forms a bridge to the 50S subunit in the 70S ribosome, contacting the 23S rRNA.

Functionally, one of the primary rRNA binding proteins, it binds directly to 16S rRNA where it helps nucleate assembly of the platform of the 30S subunit by binding and bridging several RNA helices of the 16S rRNA. In terms of biological role, forms an intersubunit bridge (bridge B4) with the 23S rRNA of the 50S subunit in the ribosome. This Buchnera aphidicola subsp. Schizaphis graminum (strain Sg) protein is Small ribosomal subunit protein uS15.